We begin with the raw amino-acid sequence, 246 residues long: NAD(P)H-quinone oxidoreductase subunit K (246 aa).

[4Fe-4S] cluster is bound by residues cysteine 62, cysteine 63, cysteine 127, and cysteine 158.

It belongs to the complex I 20 kDa subunit family. As to quaternary structure, NDH-1 can be composed of about 15 different subunits; different subcomplexes with different compositions have been identified which probably have different functions. [4Fe-4S] cluster is required as a cofactor.

Its subcellular location is the cellular thylakoid membrane. The catalysed reaction is a plastoquinone + NADH + (n+1) H(+)(in) = a plastoquinol + NAD(+) + n H(+)(out). The enzyme catalyses a plastoquinone + NADPH + (n+1) H(+)(in) = a plastoquinol + NADP(+) + n H(+)(out). Functionally, NDH-1 shuttles electrons from an unknown electron donor, via FMN and iron-sulfur (Fe-S) centers, to quinones in the respiratory and/or the photosynthetic chain. The immediate electron acceptor for the enzyme in this species is believed to be plastoquinone. Couples the redox reaction to proton translocation, and thus conserves the redox energy in a proton gradient. Cyanobacterial NDH-1 also plays a role in inorganic carbon-concentration. The polypeptide is NAD(P)H-quinone oxidoreductase subunit K (Parasynechococcus marenigrum (strain WH8102)).